A 114-amino-acid chain; its full sequence is MHELGITQNIVAIVAENANNRLIKRVTLEIGELSAIMPNAIEFCFDVCTQGTVLEGATLEIIKIPGLGKCRQCATEIPLEQPFGICHVCNSVELDIIQGQELKIKEMEVEELSV.

His-2 contributes to the Ni(2+) binding site. Zn(2+) contacts are provided by Cys-70, Cys-73, Cys-86, and Cys-89.

This sequence belongs to the HypA/HybF family.

Its function is as follows. Involved in the maturation of [NiFe] hydrogenases. Required for nickel insertion into the metal center of the hydrogenase. This is Hydrogenase maturation factor HypA from Trichodesmium erythraeum (strain IMS101).